The primary structure comprises 270 residues: 3-phenylpropionate-dihydrodiol/cinnamic acid-dihydrodiol dehydrogenase (270 aa).

Residue 10–34 coordinates NAD(+); sequence FITGGGSGLGLALVERFIEEGAQVA. S143 contributes to the substrate binding site. The active-site Proton acceptor is the Y156.

The protein belongs to the short-chain dehydrogenases/reductases (SDR) family.

The catalysed reaction is 3-(cis-5,6-dihydroxycyclohexa-1,3-dien-1-yl)propanoate + NAD(+) = 3-(2,3-dihydroxyphenyl)propanoate + NADH + H(+). The enzyme catalyses (2E)-3-(cis-5,6-dihydroxycyclohexa-1,3-dien-1-yl)prop-2-enoate + NAD(+) = (2E)-3-(2,3-dihydroxyphenyl)prop-2-enoate + NADH + H(+). The protein operates within aromatic compound metabolism; 3-phenylpropanoate degradation. Its function is as follows. Converts 3-phenylpropionate-dihydrodiol (PP-dihydrodiol) and cinnamic acid-dihydrodiol (CI-dihydrodiol) into 3-(2,3-dihydroxylphenyl)propanoic acid (DHPP) and 2,3-dihydroxicinnamic acid (DHCI), respectively. The sequence is that of 3-phenylpropionate-dihydrodiol/cinnamic acid-dihydrodiol dehydrogenase from Escherichia coli (strain ATCC 8739 / DSM 1576 / NBRC 3972 / NCIMB 8545 / WDCM 00012 / Crooks).